Reading from the N-terminus, the 343-residue chain is Dihydroorotase (343 aa).

Residues histidine 14 and histidine 16 each coordinate Zn(2+). Residues histidine 16–arginine 18 and asparagine 42 contribute to the substrate site. The Zn(2+) site is built by lysine 100, histidine 137, and histidine 175. The residue at position 100 (lysine 100) is an N6-carboxylysine. Substrate is bound at residue histidine 137. Leucine 220 contacts substrate. Position 248 (aspartate 248) interacts with Zn(2+). The active site involves aspartate 248. The substrate site is built by histidine 252 and alanine 264.

The protein belongs to the metallo-dependent hydrolases superfamily. DHOase family. Class II DHOase subfamily. Homodimer. Zn(2+) serves as cofactor.

The catalysed reaction is (S)-dihydroorotate + H2O = N-carbamoyl-L-aspartate + H(+). It functions in the pathway pyrimidine metabolism; UMP biosynthesis via de novo pathway; (S)-dihydroorotate from bicarbonate: step 3/3. Catalyzes the reversible cyclization of carbamoyl aspartate to dihydroorotate. This is Dihydroorotase from Synechococcus sp. (strain CC9902).